A 185-amino-acid polypeptide reads, in one-letter code: Elongation factor P (185 aa).

This sequence belongs to the elongation factor P family.

It is found in the cytoplasm. The protein operates within protein biosynthesis; polypeptide chain elongation. In terms of biological role, involved in peptide bond synthesis. Stimulates efficient translation and peptide-bond synthesis on native or reconstituted 70S ribosomes in vitro. Probably functions indirectly by altering the affinity of the ribosome for aminoacyl-tRNA, thus increasing their reactivity as acceptors for peptidyl transferase. This chain is Elongation factor P, found in Bacillus licheniformis (strain ATCC 14580 / DSM 13 / JCM 2505 / CCUG 7422 / NBRC 12200 / NCIMB 9375 / NCTC 10341 / NRRL NRS-1264 / Gibson 46).